We begin with the raw amino-acid sequence, 143 residues long: Large-conductance mechanosensitive channel (143 aa).

A run of 2 helical transmembrane segments spans residues 19–39 (VGVI…ADVI) and 81–101 (GSFL…FLVV).

This sequence belongs to the MscL family. In terms of assembly, homopentamer.

The protein resides in the cell inner membrane. Its function is as follows. Channel that opens in response to stretch forces in the membrane lipid bilayer. May participate in the regulation of osmotic pressure changes within the cell. The protein is Large-conductance mechanosensitive channel of Rhodopseudomonas palustris (strain HaA2).